The chain runs to 379 residues: Carbamoyl phosphate synthase small chain (379 aa).

Residues 1-188 (MSTPAILALA…ELGKGFTQPE (188 aa)) form a CPSase region. Ser-47, Gly-240, and Gly-242 together coordinate L-glutamine. Residues 192–379 (HVVAYDYGVK…FIELIEAAKK (188 aa)) enclose the Glutamine amidotransferase type-1 domain. Residue Cys-269 is the Nucleophile of the active site. 5 residues coordinate L-glutamine: Leu-270, Gln-273, Asn-311, Gly-313, and Phe-314. Catalysis depends on residues His-353 and Glu-355.

The protein belongs to the CarA family. In terms of assembly, composed of two chains; the small (or glutamine) chain promotes the hydrolysis of glutamine to ammonia, which is used by the large (or ammonia) chain to synthesize carbamoyl phosphate. Tetramer of heterodimers (alpha,beta)4.

It carries out the reaction hydrogencarbonate + L-glutamine + 2 ATP + H2O = carbamoyl phosphate + L-glutamate + 2 ADP + phosphate + 2 H(+). It catalyses the reaction L-glutamine + H2O = L-glutamate + NH4(+). Its pathway is amino-acid biosynthesis; L-arginine biosynthesis; carbamoyl phosphate from bicarbonate: step 1/1. It functions in the pathway pyrimidine metabolism; UMP biosynthesis via de novo pathway; (S)-dihydroorotate from bicarbonate: step 1/3. Its function is as follows. Small subunit of the glutamine-dependent carbamoyl phosphate synthetase (CPSase). CPSase catalyzes the formation of carbamoyl phosphate from the ammonia moiety of glutamine, carbonate, and phosphate donated by ATP, constituting the first step of 2 biosynthetic pathways, one leading to arginine and/or urea and the other to pyrimidine nucleotides. The small subunit (glutamine amidotransferase) binds and cleaves glutamine to supply the large subunit with the substrate ammonia. The protein is Carbamoyl phosphate synthase small chain of Acinetobacter baylyi (strain ATCC 33305 / BD413 / ADP1).